A 399-amino-acid chain; its full sequence is Argininosuccinate synthase (399 aa).

ATP is bound by residues 8–16 (AYSGGLDTS) and Ala35. Tyr87 is a binding site for L-citrulline. Residue Gly117 participates in ATP binding. Residues Thr119, Asn123, and Asp124 each contribute to the L-aspartate site. Asn123 is a binding site for L-citrulline. Residues Arg127, Ser176, Ser185, Glu261, and Tyr273 each contribute to the L-citrulline site.

The protein belongs to the argininosuccinate synthase family. Type 1 subfamily. As to quaternary structure, homotetramer.

It localises to the cytoplasm. The enzyme catalyses L-citrulline + L-aspartate + ATP = 2-(N(omega)-L-arginino)succinate + AMP + diphosphate + H(+). It functions in the pathway amino-acid biosynthesis; L-arginine biosynthesis; L-arginine from L-ornithine and carbamoyl phosphate: step 2/3. The protein is Argininosuccinate synthase of Buchnera aphidicola subsp. Cinara cedri (strain Cc).